Reading from the N-terminus, the 57-residue chain is DNA-directed RNA polymerase subunit Rpo6 (57 aa).

Belongs to the archaeal Rpo6/eukaryotic RPB6 RNA polymerase subunit family. In terms of assembly, part of the RNA polymerase complex.

It is found in the cytoplasm. It carries out the reaction RNA(n) + a ribonucleoside 5'-triphosphate = RNA(n+1) + diphosphate. Its function is as follows. DNA-dependent RNA polymerase (RNAP) catalyzes the transcription of DNA into RNA using the four ribonucleoside triphosphates as substrates. The polypeptide is DNA-directed RNA polymerase subunit Rpo6 (Pyrococcus abyssi (strain GE5 / Orsay)).